Consider the following 263-residue polypeptide: Probable ABC transporter permease protein ycf63 (263 aa).

The next 5 helical transmembrane spans lie at 43 to 63, 70 to 89, 150 to 170, 188 to 208, and 230 to 250; these read IVGP…SMVF, EFLY…IAFT, ILSI…AFVM, ISDF…IGFI, and SVVT…YFMF.

Belongs to the MlaE permease family.

It is found in the plastid. The protein localises to the chloroplast membrane. Its function is as follows. Could be part of an ABC transporter complex. The chain is Probable ABC transporter permease protein ycf63 (ycf63) from Pyropia yezoensis (Susabi-nori).